The following is a 488-amino-acid chain: UDP-N-acetylmuramoyl-L-alanyl-D-glutamate--2,6-diaminopimelate ligase (488 aa).

UDP-N-acetyl-alpha-D-muramoyl-L-alanyl-D-glutamate is bound by residues leucine 24, serine 26, and 41–43 (HQV). 113 to 119 (GTNGKTT) provides a ligand contact to ATP. Residues asparagine 154, 155–156 (TT), serine 182, glutamine 188, and arginine 190 contribute to the UDP-N-acetyl-alpha-D-muramoyl-L-alanyl-D-glutamate site. The residue at position 222 (lysine 222) is an N6-carboxylysine. Residues arginine 386, 410–413 (DNPR), glycine 461, and glutamate 465 contribute to the meso-2,6-diaminopimelate site. The Meso-diaminopimelate recognition motif motif lies at 410–413 (DNPR).

It belongs to the MurCDEF family. MurE subfamily. Mg(2+) serves as cofactor. Carboxylation is probably crucial for Mg(2+) binding and, consequently, for the gamma-phosphate positioning of ATP.

The protein localises to the cytoplasm. The enzyme catalyses UDP-N-acetyl-alpha-D-muramoyl-L-alanyl-D-glutamate + meso-2,6-diaminopimelate + ATP = UDP-N-acetyl-alpha-D-muramoyl-L-alanyl-gamma-D-glutamyl-meso-2,6-diaminopimelate + ADP + phosphate + H(+). Its pathway is cell wall biogenesis; peptidoglycan biosynthesis. In terms of biological role, catalyzes the addition of meso-diaminopimelic acid to the nucleotide precursor UDP-N-acetylmuramoyl-L-alanyl-D-glutamate (UMAG) in the biosynthesis of bacterial cell-wall peptidoglycan. The protein is UDP-N-acetylmuramoyl-L-alanyl-D-glutamate--2,6-diaminopimelate ligase of Haemophilus influenzae (strain PittGG).